The following is a 173-amino-acid chain: Large ribosomal subunit protein uL10 (173 aa).

Belongs to the universal ribosomal protein uL10 family. In terms of assembly, part of the ribosomal stalk of the 50S ribosomal subunit. The N-terminus interacts with L11 and the large rRNA to form the base of the stalk. The C-terminus forms an elongated spine to which L12 dimers bind in a sequential fashion forming a multimeric L10(L12)X complex.

Forms part of the ribosomal stalk, playing a central role in the interaction of the ribosome with GTP-bound translation factors. This Thermus thermophilus (strain ATCC BAA-163 / DSM 7039 / HB27) protein is Large ribosomal subunit protein uL10.